Here is a 216-residue protein sequence, read N- to C-terminus: GTP cyclohydrolase 1 (216 aa).

Zn(2+) contacts are provided by cysteine 108, histidine 111, and cysteine 179.

It belongs to the GTP cyclohydrolase I family. As to quaternary structure, toroid-shaped homodecamer, composed of two pentamers of five dimers.

It catalyses the reaction GTP + H2O = 7,8-dihydroneopterin 3'-triphosphate + formate + H(+). Its pathway is cofactor biosynthesis; 7,8-dihydroneopterin triphosphate biosynthesis; 7,8-dihydroneopterin triphosphate from GTP: step 1/1. This is GTP cyclohydrolase 1 from Shewanella amazonensis (strain ATCC BAA-1098 / SB2B).